The primary structure comprises 55 residues: uncharacterized protein (55 aa).

Residues 1 to 19 form the signal peptide; sequence MQILLVVRLVLLWLGGLSA.

This is an uncharacterized protein from Orgyia pseudotsugata multicapsid polyhedrosis virus (OpMNPV).